A 415-amino-acid chain; its full sequence is Serine hydroxymethyltransferase 2 (415 aa).

Residues Leu122 and 126 to 128 (GHL) each bind (6S)-5,6,7,8-tetrahydrofolate. At Lys230 the chain carries N6-(pyridoxal phosphate)lysine.

Belongs to the SHMT family. In terms of assembly, homodimer. The cofactor is pyridoxal 5'-phosphate.

It is found in the cytoplasm. The enzyme catalyses (6R)-5,10-methylene-5,6,7,8-tetrahydrofolate + glycine + H2O = (6S)-5,6,7,8-tetrahydrofolate + L-serine. The protein operates within one-carbon metabolism; tetrahydrofolate interconversion. It participates in amino-acid biosynthesis; glycine biosynthesis; glycine from L-serine: step 1/1. Catalyzes the reversible interconversion of serine and glycine with tetrahydrofolate (THF) serving as the one-carbon carrier. This reaction serves as the major source of one-carbon groups required for the biosynthesis of purines, thymidylate, methionine, and other important biomolecules. Also exhibits THF-independent aldolase activity toward beta-hydroxyamino acids, producing glycine and aldehydes, via a retro-aldol mechanism. The chain is Serine hydroxymethyltransferase 2 from Burkholderia lata (strain ATCC 17760 / DSM 23089 / LMG 22485 / NCIMB 9086 / R18194 / 383).